Here is a 1579-residue protein sequence, read N- to C-terminus: DNA-directed RNA polymerase II subunit RPB1 (1579 aa).

Zn(2+) is bound by residues cysteine 68, cysteine 71, cysteine 78, histidine 81, cysteine 108, cysteine 111, cysteine 149, and cysteine 171. Mg(2+)-binding residues include aspartate 485, aspartate 487, and aspartate 489. A bridging helix region spans residues 642–654; that stretch reads PQEFFFHAMAGRE. A Glycyl lysine isopeptide (Lys-Gly) (interchain with G-Cter in ubiquitin) cross-link involves residue lysine 1080. Positions 1382–1565 are enriched in low complexity; it reads SPTYSPTSPS…NSPQYSPRSP (184 aa). A disordered region spans residues 1382 to 1579; that stretch reads SPTYSPTSPS…DQNDDKDKKQ (198 aa). 16 consecutive repeat copies span residues 1385-1391, 1392-1398, 1399-1405, 1406-1412, 1413-1419, 1420-1426, 1427-1433, 1434-1440, 1441-1447, 1448-1454, 1455-1461, 1462-1468, 1469-1475, 1476-1482, 1483-1489, and 1490-1496. The interval 1385–1566 is C-terminal domain (CTD); 26 X 7 AA approximate tandem repeats of Y-S-P-T-S-P-[S-A-Q]; that stretch reads YSPTSPSYSP…SPQYSPRSPL (182 aa). The 17; approximate repeat unit spans residues 1497 to 1503; it reads YSPTSPL. Repeat copies occupy residues 1504–1510, 1511–1517, 1518–1524, 1525–1531, 1532–1538, 1539–1545, and 1546–1552. The stretch at 1553 to 1559 is one 25; approximate repeat; the sequence is YSPNSPQ. A 26; approximate repeat occupies 1560–1566; that stretch reads YSPRSPL.

The protein belongs to the RNA polymerase beta' chain family. As to quaternary structure, component of the RNA polymerase II (Pol II) complex consisting of 12 subunits. The tandem 7 residues repeats in the C-terminal domain (CTD) can be highly phosphorylated. The phosphorylation activates Pol II. Phosphorylation occurs mainly at residues 'Ser-2' and 'Ser-5' of the heptapeptide repeat. The phosphorylation state is believed to result from the balanced action of site-specific CTD kinases and phosphatase, and a 'CTD code' that specifies the position of Pol II within the transcription cycle has been proposed. Post-translationally, following transcription stress, the elongating form of RNA polymerase II (RNA pol IIo) is polyubiquitinated via 'Lys-63'-linkages on Lys-1080 at DNA damage sites without leading to degradation: ubiquitination promotes RNA pol IIo backtracking to allow access by the transcription-coupled nucleotide excision repair (TC-NER) machinery. Subsequent DEF1-dependent polyubiquitination by the elongin complex via 'Lys-48'-linkages may lead to proteasome-mediated degradation; presumably at stalled RNA pol II where TC-NER has failed, to halt global transcription and enable 'last resort' DNA repair pathways.

Its subcellular location is the nucleus. It carries out the reaction RNA(n) + a ribonucleoside 5'-triphosphate = RNA(n+1) + diphosphate. DNA-dependent RNA polymerase catalyzes the transcription of DNA into RNA using the four ribonucleoside triphosphates as substrates. Largest and catalytic component of RNA polymerase II which synthesizes mRNA precursors and many functional non-coding RNAs. Forms the polymerase active center together with the second largest subunit. Pol II is the central component of the basal RNA polymerase II transcription machinery. It is composed of mobile elements that move relative to each other. RPB1 is part of the core element with the central large cleft, the clamp element that moves to open and close the cleft and the jaws that are thought to grab the incoming DNA template. At the start of transcription, a single-stranded DNA template strand of the promoter is positioned within the central active site cleft of Pol II. A bridging helix emanates from RPB1 and crosses the cleft near the catalytic site and is thought to promote translocation of Pol II by acting as a ratchet that moves the RNA-DNA hybrid through the active site by switching from straight to bent conformations at each step of nucleotide addition. During transcription elongation, Pol II moves on the template as the transcript elongates. Elongation is influenced by the phosphorylation status of the C-terminal domain (CTD) of Pol II largest subunit (RPB1), which serves as a platform for assembly of factors that regulate transcription initiation, elongation, termination and mRNA processing. The protein is DNA-directed RNA polymerase II subunit RPB1 (RPB1) of Meyerozyma guilliermondii (strain ATCC 6260 / CBS 566 / DSM 6381 / JCM 1539 / NBRC 10279 / NRRL Y-324) (Yeast).